Consider the following 146-residue polypeptide: Large ribosomal subunit protein uL13 (146 aa).

This sequence belongs to the universal ribosomal protein uL13 family. Part of the 50S ribosomal subunit.

In terms of biological role, this protein is one of the early assembly proteins of the 50S ribosomal subunit, although it is not seen to bind rRNA by itself. It is important during the early stages of 50S assembly. The chain is Large ribosomal subunit protein uL13 from Spiroplasma citri.